Reading from the N-terminus, the 403-residue chain is Dynactin subunit 2 (403 aa).

The interval 1–26 (MADPKYADLPGIARNEPDVYETSDLP) is disordered. Ala-2 is subject to N-acetylalanine. A Phosphotyrosine modification is found at Tyr-6. At Ser-83 the chain carries Phosphoserine. Tyr-86 is modified (phosphotyrosine). Positions 100–130 (QQKYQRLLHEVQELTTEVEKIKTTVKESATE) form a coiled coil. 2 positions are modified to phosphothreonine: Thr-134 and Thr-200. The tract at residues 184 to 204 (TKNSKGTGSGGKTTSGTPPDS) is disordered. Residues 216 to 248 (EQDKFSQAAKVAELEKRLTELEATVRCDQDAQN) are a coiled coil. Position 322 is a phosphoserine (Ser-322).

This sequence belongs to the dynactin subunit 2 family. Subunit of dynactin, a multiprotein complex part of a tripartite complex with dynein and a adapter, such as BICDL1, BICD2 or HOOK3. The dynactin complex is built around ACTR1A/ACTB filament and consists of an actin-related filament composed of a shoulder domain, a pointed end and a barbed end. Its length is defined by its flexible shoulder domain. The soulder is composed of 2 DCTN1 subunits, 4 DCTN2 and 2 DCTN3. The 4 DCNT2 (via N-terminus) bind the ACTR1A filament and act as molecular rulers to determine the length. The pointed end is important for binding dynein-dynactin cargo adapters and consists of 4 subunits: ACTR10, DCNT4, DCTN5 and DCTN6. The barbed end is composed of a CAPZA1:CAPZB heterodimers, which binds ACTR1A/ACTB filament and dynactin and stabilizes dynactin. Interacts with BICD2 and CEP135. Interacts with DYNAP. Interacts with ECPAS. Interacts with MAPRE1.

The protein localises to the cytoplasm. It localises to the cytoskeleton. It is found in the microtubule organizing center. Its subcellular location is the centrosome. The protein resides in the membrane. In terms of biological role, part of the dynactin complex that activates the molecular motor dynein for ultra-processive transport along microtubules. In the dynactin soulder domain, binds the ACTR1A filament and acts as a molecular ruler to determine the length. Modulates cytoplasmic dynein binding to an organelle, and plays a role in prometaphase chromosome alignment and spindle organization during mitosis. Involved in anchoring microtubules to centrosomes. May play a role in synapse formation during brain development. This chain is Dynactin subunit 2 (DCTN2), found in Bos taurus (Bovine).